Here is a 476-residue protein sequence, read N- to C-terminus: Proton-coupled amino acid transporter 1 (476 aa).

Residues 1 to 15 (MSTQRLRNEDYHDYS) are compositionally biased toward basic and acidic residues. The interval 1 to 32 (MSTQRLRNEDYHDYSSTDVSPEESPSEGLNNL) is disordered. Over 1–51 (MSTQRLRNEDYHDYSSTDVSPEESPSEGLNNLSSPGSYQRFGQSNSTTWFQ) the chain is Cytoplasmic. Residues 52-72 (TLIHLLKGNIGTGLLGLPLAV) traverse the membrane as a helical segment. The Extracellular portion of the chain corresponds to 73–78 (KNAGIV). Residues 79–99 (MGPISLLIIGIVAVHCMGILV) form a helical membrane-spanning segment. Residues 100-141 (KCAHHFCRRLNKSFVDYGDTVMYGLESSPCSWLRNHAHWGRR) are Cytoplasmic-facing. A helical transmembrane segment spans residues 142-162 (VVDFFLIVTQLGFCCVYFVFL). At 163–190 (ADNFKQVIEAANGTTNNCHNNETVILTP) the chain is on the extracellular side. Asn174 and Asn183 each carry an N-linked (GlcNAc...) asparagine glycan. An intrachain disulfide couples Cys180 to Cys329. Residues 191–211 (TMDSRLYMLSFLPFLVLLVFI) traverse the membrane as a helical segment. At 212–215 (RNLR) the chain is on the cytoplasmic side. Residues 216–236 (ALSIFSLLANITMLVSLVMIY) traverse the membrane as a helical segment. Residues 237–257 (QFIVQRIPDPSHLPLVAPWKT) lie on the Extracellular side of the membrane. Residues 258 to 278 (YPLFFGTAIFSFEGIGMVLPL) traverse the membrane as a helical segment. The Cytoplasmic portion of the chain corresponds to 279–289 (ENKMKDPRKFP). The chain crosses the membrane as a helical span at residues 290–310 (LILYLGMVIVTILYISLGCLG). At 311-342 (YLQFGANIQGSITLNLPNCWLYQSVKLLYSIG) the chain is on the extracellular side. The helical transmembrane segment at 343 to 363 (IFFTYALQFYVPAEIIIPFFV) threads the bilayer. The Cytoplasmic segment spans residues 364–372 (SRAPEHCEL). A helical membrane pass occupies residues 373 to 393 (VVDLFVRTVLVCLTCILAILI). The Extracellular portion of the chain corresponds to 394–397 (PRLD). The chain crosses the membrane as a helical span at residues 398 to 418 (LVISLVGSVSSSALALIIPPL). At 419 to 439 (LEVTTFYSEGMSPLTIFKDAL) the chain is on the cytoplasmic side. A helical membrane pass occupies residues 440–460 (ISILGFVGFVVGTYEALYELI). Residues 461–476 (QPSNAPIFINSTCAFI) are Extracellular-facing. Asn470 carries N-linked (GlcNAc...) asparagine glycosylation.

Belongs to the amino acid/polyamine transporter 2 family.

It is found in the cell membrane. Its subcellular location is the apical cell membrane. It localises to the lysosome membrane. It catalyses the reaction glycine(in) + H(+)(in) = glycine(out) + H(+)(out). The enzyme catalyses L-alanine(in) + H(+)(in) = L-alanine(out) + H(+)(out). The catalysed reaction is D-alanine(in) + H(+)(in) = D-alanine(out) + H(+)(out). It carries out the reaction L-proline(out) + H(+)(out) = L-proline(in) + H(+)(in). It catalyses the reaction D-proline(out) + H(+)(out) = D-proline(in) + H(+)(in). The enzyme catalyses D-serine(out) + H(+)(out) = D-serine(in) + H(+)(in). The catalysed reaction is L-serine(in) + H(+)(in) = L-serine(out) + H(+)(out). It carries out the reaction 4-aminobutanoate(in) + H(+)(in) = 4-aminobutanoate(out) + H(+)(out). It catalyses the reaction beta-alanine(in) + H(+)(in) = beta-alanine(out) + H(+)(out). Electrogenic proton/amino acid symporter with selectivity for small apolar L-amino acids, their D-enantiomers and selected amino acid derivatives such as 4-aminobutanoate/GABA. May be involved in the efflux from the lysosomal compartment of neutral amino acids resulting from proteolysis. May play a role in specifying sites for exocytosis in neurons. The protein is Proton-coupled amino acid transporter 1 of Homo sapiens (Human).